A 133-amino-acid chain; its full sequence is Adenosine 5'-monophosphoramidase hnt1 (133 aa).

One can recognise an HIT domain in the interval 4–107 (IFCKIVKGDI…IPKPNEEYGL (104 aa)). AMP contacts are provided by residues 29 to 30 (DI), Asn81, 87 to 89 (HQF), and 94 to 96 (HFH). Positions 92-96 (HVHFH) match the Histidine triad motif motif. The Tele-AMP-histidine intermediate role is filled by His94.

This sequence belongs to the HINT family. In terms of assembly, homodimer. The cofactor is Mg(2+).

The protein localises to the nucleus. The catalysed reaction is adenosine 5'-phosphoramidate + H2O = AMP + NH4(+). Functionally, hydrolyzes adenosine 5'-monophosphoramidate substrates such as AMP-morpholidate, AMP-N-alanine methyl ester, AMP-alpha-acetyl lysine methyl ester and AMP-NH2. This chain is Adenosine 5'-monophosphoramidase hnt1 (hnt1), found in Schizosaccharomyces pombe (strain 972 / ATCC 24843) (Fission yeast).